The following is a 75-amino-acid chain: Dermaseptin-SP3 (75 aa).

Positions 1-22 are cleaved as a signal peptide; the sequence is MAFLKKSLFLVLFLGLVSLSMC. Residues 23–45 constitute a propeptide that is removed on maturation; that stretch reads EEEKRENEVEEEQEDDEQSELRR. Proline amide is present on Pro72. The propeptide occupies 74 to 75; it reads EQ.

The protein belongs to the frog skin active peptide (FSAP) family. Dermaseptin subfamily. In terms of tissue distribution, expressed by the skin glands.

The protein resides in the secreted. It localises to the target cell membrane. Its function is as follows. Antimicrobial peptide with activity against Gram-positive and Gram-negative bacteria and fungi. Has been tested against E.coli (MIC=47.50-128 uM), S.aureus (MIC=189.98-512 uM), K.pneumoniae (MIC&gt;189.98 uM) and C.albicans (MIC&gt;189.98 uM). Probably acts by disturbing membrane functions with its alpha-helical amphipathic structure. May penetrate bacterial membranes, but stay at the mammalian membrane surface. Shows a very weak hemolytic activity. The polypeptide is Dermaseptin-SP3 (Agalychnis spurrelli (Gliding leaf frog)).